The primary structure comprises 292 residues: NADH-cytochrome b5 reductase 1 (292 aa).

A helical membrane pass occupies residues 12 to 32; it reads ALLVVGTAIFAVLVGAKFLGG. Positions 43–148 constitute an FAD-binding FR-type domain; the sequence is TEFQNFVLKE…RGPKGAMVYT (106 aa). Residues 128 to 143 and 154 to 191 contribute to the FAD site; these read TTLK…GPKG and HIGM…QVDL.

It belongs to the flavoprotein pyridine nucleotide cytochrome reductase family. As to quaternary structure, monomer. Component of the 2-(3-amino-3-carboxypropyl)histidine synthase complex composed of dph1, dph2, dph3 and a NADH-dependent reductase, predominantly cbr1. FAD is required as a cofactor.

It is found in the mitochondrion outer membrane. It catalyses the reaction 2 Fe(III)-[cytochrome b5] + NADH = 2 Fe(II)-[cytochrome b5] + NAD(+) + H(+). The enzyme catalyses 2 Fe(3+)-[Dph3] + NADH = 2 Fe(2+)-[Dph3] + NAD(+) + H(+). It functions in the pathway protein modification; peptidyl-diphthamide biosynthesis. NADH-dependent reductase for dph3 and cytochrome b5. Required for the first step of diphthamide biosynthesis, a post-translational modification of histidine which occurs in elongation factor 2. Dph1 and dph2 transfer a 3-amino-3-carboxypropyl (ACP) group from S-adenosyl-L-methionine (SAM) to a histidine residue, the reaction is assisted by a reduction system comprising dph3 and a NADH-dependent reductase, predominantly cbr1. By reducing dph3, also involved in the formation of the tRNA wobble base modification mcm5s 2U (5-methoxycarbonylmethyl-2-thiouridine), mediated by the elongator complex. The cytochrome b5/NADH cytochrome b5 reductase electron transfer system supports the catalytic activity of several sterol biosynthetic enzymes. The polypeptide is NADH-cytochrome b5 reductase 1 (cbr1) (Aspergillus oryzae (strain ATCC 42149 / RIB 40) (Yellow koji mold)).